A 504-amino-acid chain; its full sequence is Zinc finger CCCH-type with G patch domain-containing protein (504 aa).

The segment at 95–121 (LSEDSNEVKPNPDTDEENEEEEQDISG) is disordered. The segment covering 107 to 118 (DTDEENEEEEQD) has biased composition (acidic residues). The segment at 165–191 (KSMKPCGFYLEGKCRFMDNCRYSHGEV) adopts a C3H1-type zinc-finger fold. Positions 308–354 (TRGIGSKLLMKMGYELGKGLGKTLSGRVEPVQAVVLPKGHSLDICAE) constitute a G-patch domain.

It is found in the nucleus. In terms of biological role, transcription repressor that specifically binds the 5'-GGAG[GA]A[GA]A-3' consensus sequence. Represses transcription by recruiting the chromatin multiprotein complex NuRD to target promoters. Negatively regulates expression of EGFR, a gene involved in cell proliferation, survival and migration. This is Zinc finger CCCH-type with G patch domain-containing protein (zgpat) from Danio rerio (Zebrafish).